The sequence spans 251 residues: tRNA (guanine-N(7)-)-methyltransferase (251 aa).

The S-adenosyl-L-methionine site is built by E69, E94, D121, and D143. Residue D143 is part of the active site. Residues K147 and D179 each coordinate substrate.

The protein belongs to the class I-like SAM-binding methyltransferase superfamily. TrmB family.

The catalysed reaction is guanosine(46) in tRNA + S-adenosyl-L-methionine = N(7)-methylguanosine(46) in tRNA + S-adenosyl-L-homocysteine. The protein operates within tRNA modification; N(7)-methylguanine-tRNA biosynthesis. Functionally, catalyzes the formation of N(7)-methylguanine at position 46 (m7G46) in tRNA. This Rhodopseudomonas palustris (strain BisB18) protein is tRNA (guanine-N(7)-)-methyltransferase.